A 130-amino-acid chain; its full sequence is Granulin (130 aa).

The signal sequence occupies residues 1–26; it reads MNYSKIFIFGIISLILMALFSSTVES. Intrachain disulfides connect cysteine 67–cysteine 79 and cysteine 73–cysteine 89.

The protein belongs to the granulin family. Granulins are disulfide bridged.

Its subcellular location is the secreted. The chain is Granulin (grn) from Dictyostelium discoideum (Social amoeba).